The following is a 272-amino-acid chain: 3-methyl-2-oxobutanoate hydroxymethyltransferase (272 aa).

The Mg(2+) site is built by Asp-52 and Asp-91. 3-methyl-2-oxobutanoate-binding positions include Asp-52 to Ser-53, Asp-91, and Lys-121. Glu-123 provides a ligand contact to Mg(2+). The Proton acceptor role is filled by Glu-190.

This sequence belongs to the PanB family. As to quaternary structure, homodecamer; pentamer of dimers. The cofactor is Mg(2+).

The protein resides in the cytoplasm. It catalyses the reaction 3-methyl-2-oxobutanoate + (6R)-5,10-methylene-5,6,7,8-tetrahydrofolate + H2O = 2-dehydropantoate + (6S)-5,6,7,8-tetrahydrofolate. The protein operates within cofactor biosynthesis; (R)-pantothenate biosynthesis; (R)-pantoate from 3-methyl-2-oxobutanoate: step 1/2. In terms of biological role, catalyzes the reversible reaction in which hydroxymethyl group from 5,10-methylenetetrahydrofolate is transferred onto alpha-ketoisovalerate to form ketopantoate. The protein is 3-methyl-2-oxobutanoate hydroxymethyltransferase of Cytophaga hutchinsonii (strain ATCC 33406 / DSM 1761 / CIP 103989 / NBRC 15051 / NCIMB 9469 / D465).